Reading from the N-terminus, the 1176-residue chain is Translation initiation factor IF-2 (1176 aa).

Composition is skewed to low complexity over residues 32 to 44 (IAAKSHSSSISDS), 57 to 79 (ASPSQPTAPAAKPAPAKPAAGKS), 94 to 166 (APVA…AAPS), and 193 to 235 (KPTP…VKPT). 2 disordered regions span residues 32 to 502 (IAAK…QRQK) and 535 to 567 (RPAKPKAQQRTAPKPVAAVRKRRKETARQRQRR). The segment covering 251–270 (APPPASTPRPAPSRPTPRPA) has biased composition (pro residues). 2 stretches are compositionally biased toward low complexity: residues 388 to 409 (GRPGAPTRPGAPTRPGMPGGMR) and 439 to 469 (NRPTEAAGTATPPVARPTAPSAPRRPGFRPG). Positions 478–492 (GRPDWDDSAKLEALR) are enriched in basic and acidic residues. A compositionally biased stretch (basic residues) spans 553–567 (VRKRRKETARQRQRR). Residues 668-840 (RRPPVVTVMG…LLLVTEVEDL (173 aa)) enclose the tr-type G domain. The segment at 677-684 (GHVDHGKT) is G1. Position 677–684 (677–684 (GHVDHGKT)) interacts with GTP. Residues 702–706 (GITQH) form a G2 region. The tract at residues 727–730 (DTPG) is G3. GTP-binding positions include 727–731 (DTPGH) and 781–784 (NKID). Residues 781-784 (NKID) form a G4 region. Residues 817 to 819 (SAI) are G5.

Belongs to the TRAFAC class translation factor GTPase superfamily. Classic translation factor GTPase family. IF-2 subfamily.

It localises to the cytoplasm. Functionally, one of the essential components for the initiation of protein synthesis. Protects formylmethionyl-tRNA from spontaneous hydrolysis and promotes its binding to the 30S ribosomal subunits. Also involved in the hydrolysis of GTP during the formation of the 70S ribosomal complex. The chain is Translation initiation factor IF-2 from Synechococcus sp. (strain CC9902).